A 470-amino-acid polypeptide reads, in one-letter code: MNPNQKIITIGSISIAIGIISLMLQIGNIISIWASHSIQTGSQNHTGICNQRIITYENSTWVNHTYVNINNTNVVAGKDKTSVTLAGNSSLCSISGWAIYTKDNSIRIGSKGDVFVIREPFISCSHLECRTFFLTQGALLNDKHSNGTVKDRSPYRALMSCPLGEAPSPYNSKFESVAWSASACHDGMGWLTIGISGPDNGAVAVLKYNGIITETIKSWKKRILRTQESECVCVNGSCFTIMTDGPSNGAASYKIFKIEKGKVTKSIELNAPNFHYEECSCYPDTGTVMCVCRDNWHGSNRPWVSFNQNLDYQIGYICSGVFGDNPRPKDGEGSCNPVTVDGADGVKGFSYKYGNGVWIGRTKSNRLRKGFEMIWDPNGWTDTDSNFSVKQDVVAITDWSGYSGSFVQHPELTGLDCIRPCFWVELVRGLPRENTTIWTSGSSISFCGVNSDTANWSWPDGAELPFTIDK.

The Intravirion portion of the chain corresponds to 1–6; the sequence is MNPNQK. Residues 7–27 form a helical membrane-spanning segment; sequence IITIGSISIAIGIISLMLQIG. Residues 11–33 are involved in apical transport and lipid raft association; it reads GSISIAIGIISLMLQIGNIISIW. Residues 28 to 470 lie on the Virion surface side of the membrane; sequence NIISIWASHS…GAELPFTIDK (443 aa). The hypervariable stalk region stretch occupies residues 36-90; the sequence is HSIQTGSQNHTGICNQRIITYENSTWVNHTYVNINNTNVVAGKDKTSVTLAGNSS. 5 N-linked (GlcNAc...) asparagine; by host glycosylation sites follow: Asn-44, Asn-58, Asn-63, Asn-70, and Asn-88. The tract at residues 91 to 470 is head of neuraminidase; sequence LCSISGWAIY…GAELPFTIDK (380 aa). Intrachain disulfides connect Cys-92/Cys-417, Cys-124/Cys-129, Cys-184/Cys-231, Cys-233/Cys-238, Cys-279/Cys-292, Cys-281/Cys-290, Cys-318/Cys-335, and Cys-421/Cys-447. Substrate is bound at residue Arg-118. N-linked (GlcNAc...) asparagine; by host glycosylation is present at Asn-146. The active-site Proton donor/acceptor is Asp-151. Arg-152 lines the substrate pocket. Asn-235 is a glycosylation site (N-linked (GlcNAc...) asparagine; by host). Residue 277-278 coordinates substrate; that stretch reads EE. Arg-293 contributes to the substrate binding site. Asp-294, Gly-298, and Asp-324 together coordinate Ca(2+). Residue Arg-368 coordinates substrate. N-linked (GlcNAc...) asparagine; by host glycosylation occurs at Asn-386. The active-site Nucleophile is the Tyr-402. N-linked (GlcNAc...) asparagine; by host glycans are attached at residues Asn-434 and Asn-455.

Belongs to the glycosyl hydrolase 34 family. Homotetramer. Ca(2+) serves as cofactor. N-glycosylated.

It localises to the virion membrane. It is found in the host apical cell membrane. The enzyme catalyses Hydrolysis of alpha-(2-&gt;3)-, alpha-(2-&gt;6)-, alpha-(2-&gt;8)- glycosidic linkages of terminal sialic acid residues in oligosaccharides, glycoproteins, glycolipids, colominic acid and synthetic substrates.. Inhibited by the neuraminidase inhibitors zanamivir (Relenza) and oseltamivir (Tamiflu). These drugs interfere with the release of progeny virus from infected cells and are effective against all influenza strains. Resistance to neuraminidase inhibitors is quite rare. In terms of biological role, catalyzes the removal of terminal sialic acid residues from viral and cellular glycoconjugates. Cleaves off the terminal sialic acids on the glycosylated HA during virus budding to facilitate virus release. Additionally helps virus spread through the circulation by further removing sialic acids from the cell surface. These cleavages prevent self-aggregation and ensure the efficient spread of the progeny virus from cell to cell. Otherwise, infection would be limited to one round of replication. Described as a receptor-destroying enzyme because it cleaves a terminal sialic acid from the cellular receptors. May facilitate viral invasion of the upper airways by cleaving the sialic acid moieties on the mucin of the airway epithelial cells. Likely to plays a role in the budding process through its association with lipid rafts during intracellular transport. May additionally display a raft-association independent effect on budding. Plays a role in the determination of host range restriction on replication and virulence. Sialidase activity in late endosome/lysosome traffic seems to enhance virus replication. This is Neuraminidase from Influenza A virus (strain A/New Zealand:South Canterbury/35/2000 H1N1).